The sequence spans 449 residues: Probable cysteine proteinase 224L (449 aa).

Catalysis depends on residues C99, H292, and N322. Residues 429 to 449 (DTQIVFIFFLSVVILFIFIIL) traverse the membrane as a helical segment.

The protein belongs to the peptidase C1 family.

It localises to the membrane. Probable cysteine protease. This is Probable cysteine proteinase 224L from Acheta domesticus (House cricket).